A 256-amino-acid chain; its full sequence is Imidazole glycerol phosphate synthase subunit HisF (256 aa).

Residues Asp-11 and Asp-130 contribute to the active site.

The protein belongs to the HisA/HisF family. Heterodimer of HisH and HisF.

The protein resides in the cytoplasm. The catalysed reaction is 5-[(5-phospho-1-deoxy-D-ribulos-1-ylimino)methylamino]-1-(5-phospho-beta-D-ribosyl)imidazole-4-carboxamide + L-glutamine = D-erythro-1-(imidazol-4-yl)glycerol 3-phosphate + 5-amino-1-(5-phospho-beta-D-ribosyl)imidazole-4-carboxamide + L-glutamate + H(+). Its pathway is amino-acid biosynthesis; L-histidine biosynthesis; L-histidine from 5-phospho-alpha-D-ribose 1-diphosphate: step 5/9. IGPS catalyzes the conversion of PRFAR and glutamine to IGP, AICAR and glutamate. The HisF subunit catalyzes the cyclization activity that produces IGP and AICAR from PRFAR using the ammonia provided by the HisH subunit. This chain is Imidazole glycerol phosphate synthase subunit HisF, found in Cupriavidus taiwanensis (strain DSM 17343 / BCRC 17206 / CCUG 44338 / CIP 107171 / LMG 19424 / R1) (Ralstonia taiwanensis (strain LMG 19424)).